A 513-amino-acid polypeptide reads, in one-letter code: Quiannulatic acid synthase (513 aa).

The helical transmembrane segment at 14-34 (VFTFCNIILALASLVVAQCVY) threads the bilayer. Residue N308 is glycosylated (N-linked (GlcNAc...) asparagine). Residue C477 participates in heme binding.

The protein belongs to the cytochrome P450 family. It depends on heme as a cofactor.

It localises to the membrane. The catalysed reaction is quiannulatene + 3 reduced [NADPH--hemoprotein reductase] + 3 O2 = quiannulatate + 3 oxidized [NADPH--hemoprotein reductase] + 4 H2O + 4 H(+). It functions in the pathway secondary metabolite biosynthesis; terpenoid biosynthesis. Functionally, cytochrome P450 monooxygenase; part of the gene cluster that mediates the biosynthesis of the pentacyclic sesterterpene quiannulatic acid. The first step of the pathway is performed by the sesterterpene synthase (QS) that possesses both prenyl transferase and terpene cyclase activity, converting isopentenyl diphosphate and dimethylallyl diphosphate into geranylfarnesyl diphosphate (GFPP) and further converting GFPP into quiannulatene via an unprecedented cyclization mode which involves three rounds of hydride shifts and two successive C-C bond migrations to construct the 5-6-5-5-5 fused ring. The cytochrome P450 monooxygenase Qnn-P450 then oxidizes quiannulatene at C-19 in 3 successive reactions to afford quiannulatic acid. The chain is Quiannulatic acid synthase from Emericella variicolor (Aspergillus stellatus).